The sequence spans 421 residues: Enolase (421 aa).

Residue Gln165 coordinates (2R)-2-phosphoglycerate. Glu207 acts as the Proton donor in catalysis. Asp244, Glu285, and Asp312 together coordinate Mg(2+). Lys337, Arg366, Ser367, and Lys388 together coordinate (2R)-2-phosphoglycerate. Lys337 serves as the catalytic Proton acceptor.

The protein belongs to the enolase family. Mg(2+) is required as a cofactor.

It is found in the cytoplasm. Its subcellular location is the secreted. The protein localises to the cell surface. It carries out the reaction (2R)-2-phosphoglycerate = phosphoenolpyruvate + H2O. Its pathway is carbohydrate degradation; glycolysis; pyruvate from D-glyceraldehyde 3-phosphate: step 4/5. Catalyzes the reversible conversion of 2-phosphoglycerate (2-PG) into phosphoenolpyruvate (PEP). It is essential for the degradation of carbohydrates via glycolysis. In Ehrlichia canis (strain Jake), this protein is Enolase.